Consider the following 144-residue polypeptide: Large ribosomal subunit protein uL13 (144 aa).

This sequence belongs to the universal ribosomal protein uL13 family. In terms of assembly, part of the 50S ribosomal subunit.

Its function is as follows. This protein is one of the early assembly proteins of the 50S ribosomal subunit, although it is not seen to bind rRNA by itself. It is important during the early stages of 50S assembly. The polypeptide is Large ribosomal subunit protein uL13 (Heliobacterium modesticaldum (strain ATCC 51547 / Ice1)).